Reading from the N-terminus, the 532-residue chain is CTP synthase (532 aa).

The segment at 1 to 267 is amidoligase domain; it reads MAKFIFVTGG…QDIIIEQLQL (267 aa). S13 provides a ligand contact to CTP. S13 contributes to the UTP binding site. 14–19 contacts ATP; that stretch reads GLGKGI. Y54 contributes to the L-glutamine binding site. ATP is bound at residue D71. Positions 71 and 141 each coordinate Mg(2+). CTP is bound by residues 148–150, 188–193, and K224; these read DIE and KTKPIQ. UTP is bound by residues 188 to 193 and K224; that span reads KTKPIQ. The Glutamine amidotransferase type-1 domain maps to 292 to 532; the sequence is EISFVGKYIE…FIKAIIENNK (241 aa). L-glutamine is bound at residue G354. Catalysis depends on C381, which acts as the Nucleophile; for glutamine hydrolysis. L-glutamine-binding positions include 382–385, E405, and R461; that span reads LGMQ. Active-site residues include H506 and E508.

Belongs to the CTP synthase family. Homotetramer.

It catalyses the reaction UTP + L-glutamine + ATP + H2O = CTP + L-glutamate + ADP + phosphate + 2 H(+). The catalysed reaction is L-glutamine + H2O = L-glutamate + NH4(+). The enzyme catalyses UTP + NH4(+) + ATP = CTP + ADP + phosphate + 2 H(+). Its pathway is pyrimidine metabolism; CTP biosynthesis via de novo pathway; CTP from UDP: step 2/2. With respect to regulation, allosterically activated by GTP, when glutamine is the substrate; GTP has no effect on the reaction when ammonia is the substrate. The allosteric effector GTP functions by stabilizing the protein conformation that binds the tetrahedral intermediate(s) formed during glutamine hydrolysis. Inhibited by the product CTP, via allosteric rather than competitive inhibition. In terms of biological role, catalyzes the ATP-dependent amination of UTP to CTP with either L-glutamine or ammonia as the source of nitrogen. Regulates intracellular CTP levels through interactions with the four ribonucleotide triphosphates. The polypeptide is CTP synthase (Mycoplasma capricolum subsp. capricolum (strain California kid / ATCC 27343 / NCTC 10154)).